The primary structure comprises 452 residues: Na(+)/H(+) antiporter NhaA (452 aa).

The next 11 helical transmembrane spans lie at Met-23–Ile-43, Leu-71–Ile-91, Leu-108–Val-128, Gly-136–Gly-156, Val-165–Phe-185, His-189–Gly-209, Leu-216–His-236, Ile-316–Gly-336, Val-349–Val-369, Leu-385–Leu-405, and Glu-418–Leu-438.

It belongs to the NhaA Na(+)/H(+) (TC 2.A.33) antiporter family.

It localises to the cell inner membrane. The enzyme catalyses Na(+)(in) + 2 H(+)(out) = Na(+)(out) + 2 H(+)(in). Its function is as follows. Na(+)/H(+) antiporter that extrudes sodium in exchange for external protons. The protein is Na(+)/H(+) antiporter NhaA of Porphyromonas gingivalis (strain ATCC 33277 / DSM 20709 / CIP 103683 / JCM 12257 / NCTC 11834 / 2561).